Reading from the N-terminus, the 94-residue chain is Long neurotoxin LNTX1 (94 aa).

Residues 1 to 21 (MKILLLTLVVVTIMCLDLGYT) form the signal peptide. Intrachain disulfides connect C24–C43, C36–C64, C49–C53, C68–C79, and C80–C85.

The protein belongs to the three-finger toxin family. Long-chain subfamily. Type II alpha-neurotoxin sub-subfamily. Monomer. As to expression, expressed by the venom gland.

It is found in the secreted. Functionally, binds with high affinity to muscular (alpha-1/CHRNA1) and neuronal (alpha-7/CHRNA7) nicotinic acetylcholine receptor (nAChR) and inhibits acetylcholine from binding to the receptor, thereby impairing neuromuscular and neuronal transmission. Recombinant LNTX1 leads to a functional block of the muscle-type acetylcholine receptors. Has a cytotoxic activity. This is Long neurotoxin LNTX1 from Ophiophagus hannah (King cobra).